The primary structure comprises 453 residues: Homogentisate 1,2-dioxygenase (453 aa).

Histidine 306 functions as the Proton acceptor in the catalytic mechanism. The Fe cation site is built by histidine 349 and glutamate 355. Residues tyrosine 364 and histidine 385 each contribute to the homogentisate site. A Fe cation-binding site is contributed by histidine 385.

This sequence belongs to the homogentisate dioxygenase family. As to quaternary structure, hexamer; dimer of trimers. The cofactor is Fe cation.

It catalyses the reaction homogentisate + O2 = 4-maleylacetoacetate + H(+). The protein operates within amino-acid degradation; L-phenylalanine degradation; acetoacetate and fumarate from L-phenylalanine: step 4/6. Its function is as follows. Involved in the catabolism of homogentisate (2,5-dihydroxyphenylacetate or 2,5-OH-PhAc), a central intermediate in the degradation of phenylalanine and tyrosine. Catalyzes the oxidative ring cleavage of the aromatic ring of homogentisate to yield maleylacetoacetate. In Rhizobium leguminosarum bv. trifolii (strain WSM2304), this protein is Homogentisate 1,2-dioxygenase.